The chain runs to 433 residues: Enolase (433 aa).

A (2R)-2-phosphoglycerate-binding site is contributed by glutamine 163. Glutamate 205 (proton donor) is an active-site residue. Positions 242, 285, and 312 each coordinate Mg(2+). 4 residues coordinate (2R)-2-phosphoglycerate: lysine 337, arginine 366, serine 367, and lysine 388. Lysine 337 functions as the Proton acceptor in the catalytic mechanism.

The protein belongs to the enolase family. Requires Mg(2+) as cofactor.

It is found in the cytoplasm. The protein localises to the secreted. Its subcellular location is the cell surface. It carries out the reaction (2R)-2-phosphoglycerate = phosphoenolpyruvate + H2O. The protein operates within carbohydrate degradation; glycolysis; pyruvate from D-glyceraldehyde 3-phosphate: step 4/5. Functionally, catalyzes the reversible conversion of 2-phosphoglycerate (2-PG) into phosphoenolpyruvate (PEP). It is essential for the degradation of carbohydrates via glycolysis. This chain is Enolase, found in Lawsonia intracellularis (strain PHE/MN1-00).